A 552-amino-acid chain; its full sequence is Serine/threonine-protein kinase RIO2 (552 aa).

A Protein kinase domain is found at valine 97–phenylalanine 272. Lysine 123 is a binding site for ATP. The Proton acceptor role is filled by aspartate 228. 9 positions are modified to phosphoserine: serine 332, serine 335, serine 337, serine 350, serine 362, serine 380, serine 382, serine 385, and serine 390. The Nuclear export signal signature appears at alanine 399–valine 408. 3 positions are modified to phosphoserine: serine 412, serine 417, and serine 442. At tyrosine 445 the chain carries Phosphotyrosine. Phosphoserine is present on serine 548.

It belongs to the protein kinase superfamily. RIO-type Ser/Thr kinase family. Associated with late 40S pre-ribosomal particles. Interacts with PLK1 (via its N-terminus). Mg(2+) serves as cofactor. Autophosphorylated (in vitro). Phosphorylation at Ser-335, Ser-380, Ser-548 by PLK1 affects the timing of the metaphase-anaphase transition.

Its subcellular location is the cytoplasm. The enzyme catalyses L-seryl-[protein] + ATP = O-phospho-L-seryl-[protein] + ADP + H(+). It carries out the reaction L-threonyl-[protein] + ATP = O-phospho-L-threonyl-[protein] + ADP + H(+). Functionally, serine/threonine-protein kinase involved in the final steps of cytoplasmic maturation of the 40S ribosomal subunit. Involved in export of the 40S pre-ribosome particles (pre-40S) from the nucleus to the cytoplasm. Its kinase activity is required for the release of NOB1, PNO1 and LTV1 from the late pre-40S and the processing of 18S-E pre-rRNA to the mature 18S rRNA. Regulates the timing of the metaphase-anaphase transition during mitotic progression, and its phosphorylation, most likely by PLK1, regulates this function. The chain is Serine/threonine-protein kinase RIO2 from Homo sapiens (Human).